Here is an 88-residue protein sequence, read N- to C-terminus: Molybdopterin synthase sulfur carrier subunit (88 aa).

G88 carries the 1-thioglycine; alternate modification. A Glycyl adenylate; alternate modification is found at G88.

The protein belongs to the MoaD family. MOCS2A subfamily. Heterotetramer; composed of 2 small (MOCS2A) and 2 large (MOCS2B) subunits. Post-translationally, C-terminal thiocarboxylation occurs in 2 steps, it is first acyl-adenylated (-COAMP) via the hesA/moeB/thiF part of uba4, then thiocarboxylated (-COSH) via the rhodanese domain of uba4.

The protein localises to the cytoplasm. It participates in cofactor biosynthesis; molybdopterin biosynthesis. Functionally, acts as a sulfur carrier required for molybdopterin biosynthesis. Component of the molybdopterin synthase complex that catalyzes the conversion of precursor Z into molybdopterin by mediating the incorporation of 2 sulfur atoms into precursor Z to generate a dithiolene group. In the complex, serves as sulfur donor by being thiocarboxylated (-COSH) at its C-terminus by uba4. After interaction with MOCS2B, the sulfur is then transferred to precursor Z to form molybdopterin. The protein is Molybdopterin synthase sulfur carrier subunit of Aspergillus niger (strain ATCC MYA-4892 / CBS 513.88 / FGSC A1513).